Here is a 531-residue protein sequence, read N- to C-terminus: Laccase-4 (531 aa).

The signal sequence occupies residues 1–19 (MLSSITLLPLLAAVSTPAF). 3 consecutive Plastocyanin-like domains span residues 23 to 146 (RNYK…LVIY), 158 to 315 (VDDA…LHYE), and 384 to 507 (SLPT…VSSR). A glycan (N-linked (GlcNAc...) asparagine) is linked at Asn66. Positions 83 and 85 each coordinate Cu cation. A disulfide bond links Cys104 and Cys528. Asn109 carries an N-linked (GlcNAc...) asparagine glycan. 2 residues coordinate Cu cation: His128 and His130. 4 N-linked (GlcNAc...) asparagine glycosylation sites follow: Asn186, Asn231, Asn280, and Asn395. Cu cation contacts are provided by His427, His430, His432, His479, Cys480, and His481.

Belongs to the multicopper oxidase family. In terms of assembly, homodimer. It depends on Cu cation as a cofactor. In terms of tissue distribution, in mycelia, at a higher level than LCC1, LCC2 and LCC3.

The protein localises to the secreted. It catalyses the reaction 4 hydroquinone + O2 = 4 benzosemiquinone + 2 H2O. Functionally, lignin degradation and detoxification of lignin-derived products. The polypeptide is Laccase-4 (LCC4) (Thanatephorus cucumeris (Black scurf of potato)).